We begin with the raw amino-acid sequence, 220 residues long: Thiamine-phosphate synthase (220 aa).

4-amino-2-methyl-5-(diphosphooxymethyl)pyrimidine-binding positions include 38-42 (QYRDK) and N70. Mg(2+) is bound by residues D71 and D90. A 4-amino-2-methyl-5-(diphosphooxymethyl)pyrimidine-binding site is contributed by T109. 135–137 (TVS) contacts 2-[(2R,5Z)-2-carboxy-4-methylthiazol-5(2H)-ylidene]ethyl phosphate. Position 138 (K138) interacts with 4-amino-2-methyl-5-(diphosphooxymethyl)pyrimidine. Residues G171 and 191–192 (IS) contribute to the 2-[(2R,5Z)-2-carboxy-4-methylthiazol-5(2H)-ylidene]ethyl phosphate site.

The protein belongs to the thiamine-phosphate synthase family. Requires Mg(2+) as cofactor.

The enzyme catalyses 2-[(2R,5Z)-2-carboxy-4-methylthiazol-5(2H)-ylidene]ethyl phosphate + 4-amino-2-methyl-5-(diphosphooxymethyl)pyrimidine + 2 H(+) = thiamine phosphate + CO2 + diphosphate. It catalyses the reaction 2-(2-carboxy-4-methylthiazol-5-yl)ethyl phosphate + 4-amino-2-methyl-5-(diphosphooxymethyl)pyrimidine + 2 H(+) = thiamine phosphate + CO2 + diphosphate. It carries out the reaction 4-methyl-5-(2-phosphooxyethyl)-thiazole + 4-amino-2-methyl-5-(diphosphooxymethyl)pyrimidine + H(+) = thiamine phosphate + diphosphate. It functions in the pathway cofactor biosynthesis; thiamine diphosphate biosynthesis; thiamine phosphate from 4-amino-2-methyl-5-diphosphomethylpyrimidine and 4-methyl-5-(2-phosphoethyl)-thiazole: step 1/1. Functionally, condenses 4-methyl-5-(beta-hydroxyethyl)thiazole monophosphate (THZ-P) and 2-methyl-4-amino-5-hydroxymethyl pyrimidine pyrophosphate (HMP-PP) to form thiamine monophosphate (TMP). The sequence is that of Thiamine-phosphate synthase from Agrobacterium fabrum (strain C58 / ATCC 33970) (Agrobacterium tumefaciens (strain C58)).